Reading from the N-terminus, the 583-residue chain is L-galactono-1,4-lactone dehydrogenase 1, mitochondrial (583 aa).

The N-terminal 36 residues, 1 to 36 (MRRLLLAGILRRASSSPSSHHHLHLVRALSASSPLP), are a transit peptide targeting the mitochondrion. Residues 37 to 78 (ASDADLRKYAGYALLLLGCGAATYYSFPLPPDALHKKAVPFK) constitute a propeptide, removed in mature form. Residues 45-61 (YAGYALLLLGCGAATYY) traverse the membrane as a helical segment. In terms of domain architecture, FAD-binding PCMH-type spans 95-266 (THEVHTRVLL…AEVTLQCVER (172 aa)).

The cofactor is FAD.

It localises to the mitochondrion membrane. It carries out the reaction L-galactono-1,4-lactone + 4 Fe(III)-[cytochrome c] = L-dehydroascorbate + 4 Fe(II)-[cytochrome c] + 5 H(+). The protein operates within cofactor biosynthesis; L-ascorbate biosynthesis. Involved in the biosynthesis of ascorbic acid. This Oryza sativa subsp. japonica (Rice) protein is L-galactono-1,4-lactone dehydrogenase 1, mitochondrial (GLDH1).